Reading from the N-terminus, the 794-residue chain is Protocadherin beta-6 (794 aa).

The signal sequence occupies residues 1–27; the sequence is MMQTKVQNKKRQVAFFILLMLWGEVGS. The Extracellular segment spans residues 28 to 688; it reads ESIQYSVLEE…AQADLLTVYL (661 aa). 5 Cadherin domains span residues 34-132, 137-241, 246-345, 350-449, and 454-559; these read VLEE…APEF, MLLK…VPEF, YEAQ…APEL, FISP…APAF, and YTLF…SPFV. Asparagine 46 carries an N-linked (GlcNAc...) asparagine glycan. Cysteine 95 and cysteine 101 form a disulfide bridge. Asparagine 183 carries an N-linked (GlcNAc...) asparagine glycan. Asparagine 416 carries an N-linked (GlcNAc...) asparagine glycan. The N-linked (GlcNAc...) asparagine glycan is linked to asparagine 565. In terms of domain architecture, Cadherin 6 spans 566-669; that stretch reads GSAPCTELVP…LVDGFSQPYL (104 aa). Residues 689–709 traverse the membrane as a helical segment; that stretch reads VVALASVSSLFLFSVLLFVAV. The Cytoplasmic segment spans residues 710–794; that stretch reads RLCRRSRAAS…PTSRNSFPFS (85 aa). A disordered region spans residues 773 to 794; it reads PPQGTEREMEETPTSRNSFPFS. Polar residues predominate over residues 784–794; sequence TPTSRNSFPFS.

Forms homodimers in trans (molecules expressed by two different cells). Forms promiscuous heterodimers in cis (at the plasma membrane of the same cell) with other protocadherins.

The protein resides in the cell membrane. Functionally, calcium-dependent cell-adhesion protein involved in cells self-recognition and non-self discrimination. Thereby, it is involved in the establishment and maintenance of specific neuronal connections in the brain. The polypeptide is Protocadherin beta-6 (Pan troglodytes (Chimpanzee)).